Consider the following 439-residue polypeptide: Glycosyl hydrolase DigH (439 aa).

The first 27 residues, 1–27 (MDICSRNEKLAIRRPAILVALALLLCS), serve as a signal peptide directing secretion. Cys28 carries N-palmitoyl cysteine lipidation. Cys28 carries S-diacylglycerol cysteine lipidation. Positions 34–54 (ESMVTPPAGSKPPATTQQSSQ) are disordered.

It belongs to the glycosyl hydrolase-like 10 (GHL10) family.

It is found in the cell outer membrane. Divisome-localized glycosyl hydrolase that cleaves peptide-free (denuded) peptidoglycans. The protein is Glycosyl hydrolase DigH of Escherichia coli O6:H1 (strain CFT073 / ATCC 700928 / UPEC).